A 27-amino-acid polypeptide reads, in one-letter code: Protein YqfI (27 aa).

This is Protein YqfI from Escherichia coli (strain K12).